A 486-amino-acid polypeptide reads, in one-letter code: Betaine aldehyde dehydrogenase (486 aa).

Residues Thr23 and Asp90 each contribute to the K(+) site. Gly147–Trp149 is a binding site for NAD(+). The active-site Charge relay system is the Lys159. Residues Lys173–Glu176 and Glu226–Thr229 each bind NAD(+). Leu241 contributes to the K(+) binding site. Glu247 (proton acceptor) is an active-site residue. NAD(+) contacts are provided by Gly249, Cys281, and Glu382. Residue Cys281 is the Nucleophile of the active site. Cys281 is modified (cysteine sulfenic acid (-SOH)). Residues Lys452 and Gly455 each contribute to the K(+) site. Residue Glu459 is the Charge relay system of the active site.

The protein belongs to the aldehyde dehydrogenase family. In terms of assembly, dimer of dimers. Requires K(+) as cofactor.

The catalysed reaction is betaine aldehyde + NAD(+) + H2O = glycine betaine + NADH + 2 H(+). It participates in amine and polyamine biosynthesis; betaine biosynthesis via choline pathway; betaine from betaine aldehyde: step 1/1. Involved in the biosynthesis of the osmoprotectant glycine betaine. Catalyzes the irreversible oxidation of betaine aldehyde to the corresponding acid. The sequence is that of Betaine aldehyde dehydrogenase from Vibrio campbellii (strain ATCC BAA-1116).